We begin with the raw amino-acid sequence, 458 residues long: Glutamyl-tRNA reductase (458 aa).

Residues 49–52 (TCNR), S109, 114–116 (EQQ), and Q120 contribute to the substrate site. C50 acts as the Nucleophile in catalysis. An NADP(+)-binding site is contributed by 191–196 (GAGAMA).

Belongs to the glutamyl-tRNA reductase family. As to quaternary structure, homodimer.

The catalysed reaction is (S)-4-amino-5-oxopentanoate + tRNA(Glu) + NADP(+) = L-glutamyl-tRNA(Glu) + NADPH + H(+). The protein operates within porphyrin-containing compound metabolism; protoporphyrin-IX biosynthesis; 5-aminolevulinate from L-glutamyl-tRNA(Glu): step 1/2. Catalyzes the NADPH-dependent reduction of glutamyl-tRNA(Glu) to glutamate 1-semialdehyde (GSA). This is Glutamyl-tRNA reductase from Corynebacterium aurimucosum (strain ATCC 700975 / DSM 44827 / CIP 107346 / CN-1) (Corynebacterium nigricans).